A 1164-amino-acid chain; its full sequence is Auxin response factor 7 (1164 aa).

The TF-B3 DNA-binding region spans 127 to 229 (FCKTLTASDT…QLLLGIRRAN (103 aa)). Disordered stretches follow at residues 451-505 (HNNL…QQQL), 536-555 (QQLQ…QQQQ), 570-728 (HQQP…LLQQ), 765-858 (FLSP…SSSG), and 903-930 (KSKA…GENN). A compositionally biased stretch (polar residues) spans 464–489 (LSFQTPHGGISSSNLQFNKQNQQAPM). A compositionally biased stretch (low complexity) spans 570–635 (HQQPLQQQTQ…SQQASTHHLQ (66 aa)). Positions 637–651 (QLVSGSMASSVITPP) are enriched in polar residues. The span at 652–671 (SSSLNQSFQQQQQQSKQLQQ) shows a compositional bias: low complexity. The span at 678 to 710 (ASTSQSSVIETSKSSSNLMSAPPQETQFSRQVE) shows a compositional bias: polar residues. Composition is skewed to low complexity over residues 711–728 (QQQP…LLQQ) and 765–790 (FLSP…TLSQ). The segment covering 791–808 (GHQFPSSCTNNGLSTLQP) has biased composition (polar residues). Low complexity predominate over residues 841 to 851 (PSSSTSPSTNN). A compositionally biased stretch (polar residues) spans 903-921 (KSKASLTDHQLEASASGTS). The PB1 domain maps to 1037–1130 (RTYTKVQKRG…EVQQMSLDGN (94 aa)). The interval 1145-1164 (DSGNAWRGHYDDNSATSFNR) is disordered.

It belongs to the ARF family. As to quaternary structure, homodimers and heterodimers. Interacts with the auxin-responsive proteins IAA1 and IAA12 (BODENLOS). Interacts (via PB1 domain) with IAA17 (via PB1 domain). Interacts with IAA19. Interacts with ARF5. Binds to JMJ30. Binds to ATXR2 in the nucleus. Expressed in the whole plant.

It localises to the nucleus. In terms of biological role, auxin response factors (ARFs) are transcriptional factors that bind specifically to the DNA sequence 5'-TGTCTC-3' found in the auxin-responsive promoter elements (AuxREs). Acts as a transcriptional activator of several tropic stimulus-induced (TSI) genes, including SAUR50. Formation of heterodimers with Aux/IAA proteins may alter their ability to modulate early auxin response genes expression. Required for differential growth responses of aerial tissues. Involved in ethylene responses. Regulates lateral root formation through direct regulation of LBD16 and/or LBD29. Functionally redundant with ARF19. Mediates embryo axis formation and vascular tissues differentiation. Functionally redundant with ARF5. Involved in cellular dedifferentiation during callus formation on callus-inducing medium (CIM) and in an ATXR2-dependent manner. This is Auxin response factor 7 from Arabidopsis thaliana (Mouse-ear cress).